A 133-amino-acid chain; its full sequence is ATP synthase epsilon chain, chloroplastic (133 aa).

This sequence belongs to the ATPase epsilon chain family. F-type ATPases have 2 components, CF(1) - the catalytic core - and CF(0) - the membrane proton channel. CF(1) has five subunits: alpha(3), beta(3), gamma(1), delta(1), epsilon(1). CF(0) has three main subunits: a, b and c.

Its subcellular location is the plastid. It localises to the chloroplast thylakoid membrane. In terms of biological role, produces ATP from ADP in the presence of a proton gradient across the membrane. The chain is ATP synthase epsilon chain, chloroplastic from Phaeodactylum tricornutum (strain CCAP 1055/1).